Here is a 140-residue protein sequence, read N- to C-terminus: Nucleoside diphosphate kinase (140 aa).

ATP is bound by residues K11, F59, R87, T93, R104, and N114. H117 acts as the Pros-phosphohistidine intermediate in catalysis.

It belongs to the NDK family. Homotetramer. Mg(2+) is required as a cofactor.

Its subcellular location is the cytoplasm. The catalysed reaction is a 2'-deoxyribonucleoside 5'-diphosphate + ATP = a 2'-deoxyribonucleoside 5'-triphosphate + ADP. It carries out the reaction a ribonucleoside 5'-diphosphate + ATP = a ribonucleoside 5'-triphosphate + ADP. Functionally, major role in the synthesis of nucleoside triphosphates other than ATP. The ATP gamma phosphate is transferred to the NDP beta phosphate via a ping-pong mechanism, using a phosphorylated active-site intermediate. This is Nucleoside diphosphate kinase from Rhodovulum sulfidophilum (Rhodobacter sulfidophilus).